Here is a 252-residue protein sequence, read N- to C-terminus: UPF0246 protein FP0718 (252 aa).

It belongs to the UPF0246 family.

This Flavobacterium psychrophilum (strain ATCC 49511 / DSM 21280 / CIP 103535 / JIP02/86) protein is UPF0246 protein FP0718.